The sequence spans 184 residues: ATP synthase subunit b, chloroplastic (184 aa).

The chain crosses the membrane as a helical span at residues 27 to 49 (LATNPINLSVVLGVLIFFGKGVL).

The protein belongs to the ATPase B chain family. F-type ATPases have 2 components, F(1) - the catalytic core - and F(0) - the membrane proton channel. F(1) has five subunits: alpha(3), beta(3), gamma(1), delta(1), epsilon(1). F(0) has four main subunits: a(1), b(1), b'(1) and c(10-14). The alpha and beta chains form an alternating ring which encloses part of the gamma chain. F(1) is attached to F(0) by a central stalk formed by the gamma and epsilon chains, while a peripheral stalk is formed by the delta, b and b' chains.

Its subcellular location is the plastid. It localises to the chloroplast thylakoid membrane. F(1)F(0) ATP synthase produces ATP from ADP in the presence of a proton or sodium gradient. F-type ATPases consist of two structural domains, F(1) containing the extramembraneous catalytic core and F(0) containing the membrane proton channel, linked together by a central stalk and a peripheral stalk. During catalysis, ATP synthesis in the catalytic domain of F(1) is coupled via a rotary mechanism of the central stalk subunits to proton translocation. Functionally, component of the F(0) channel, it forms part of the peripheral stalk, linking F(1) to F(0). This is ATP synthase subunit b, chloroplastic from Cuscuta exaltata (Tall dodder).